Consider the following 614-residue polypeptide: Threonine--tRNA ligase (614 aa).

Residues 1–138 are editing domain; that stretch reads MRTLMIHSDY…HPLSELSRTI (138 aa). The disordered stretch occupies residues 133–157; that stretch reads ELSRTITTEPEEESEDSEEEPSEPS. Residues 141-154 show a composition bias toward acidic residues; sequence EPEEESEDSEEEPS. Residues 200 to 495 form a catalytic region; the sequence is PHVRLMREKE…TDKGNKPSLP (296 aa). Cys-292, His-344, and His-466 together coordinate Zn(2+).

Belongs to the class-II aminoacyl-tRNA synthetase family. In terms of assembly, homodimer. It depends on Zn(2+) as a cofactor.

Its subcellular location is the cytoplasm. The enzyme catalyses tRNA(Thr) + L-threonine + ATP = L-threonyl-tRNA(Thr) + AMP + diphosphate + H(+). In terms of biological role, catalyzes the attachment of threonine to tRNA(Thr) in a two-step reaction: L-threonine is first activated by ATP to form Thr-AMP and then transferred to the acceptor end of tRNA(Thr). Also edits incorrectly charged L-seryl-tRNA(Thr). The sequence is that of Threonine--tRNA ligase from Methanosphaera stadtmanae (strain ATCC 43021 / DSM 3091 / JCM 11832 / MCB-3).